Here is a 270-residue protein sequence, read N- to C-terminus: ATP synthase subunit a (270 aa).

A run of 5 helical transmembrane segments spans residues 37–57, 98–118, 143–163, 208–228, and 239–259; these read NVHI…LGVF, IAPL…MDLV, DVNI…YYSI, LFGN…MLPW, and AIFH…LTIV.

Belongs to the ATPase A chain family. F-type ATPases have 2 components, CF(1) - the catalytic core - and CF(0) - the membrane proton channel. CF(1) has five subunits: alpha(3), beta(3), gamma(1), delta(1), epsilon(1). CF(0) has three main subunits: a(1), b(2) and c(9-12). The alpha and beta chains form an alternating ring which encloses part of the gamma chain. CF(1) is attached to CF(0) by a central stalk formed by the gamma and epsilon chains, while a peripheral stalk is formed by the delta and b chains.

It is found in the cell inner membrane. Key component of the proton channel; it plays a direct role in the translocation of protons across the membrane. The chain is ATP synthase subunit a from Vibrio cholerae serotype O1 (strain ATCC 39315 / El Tor Inaba N16961).